A 119-amino-acid chain; its full sequence is Large ribosomal subunit protein uL18 (119 aa).

The segment at 1-23 (MISKPDKNKTRQRRHARVRGKIS) is disordered. The segment covering 10–20 (TRQRRHARVRG) has biased composition (basic residues).

It belongs to the universal ribosomal protein uL18 family. As to quaternary structure, part of the 50S ribosomal subunit; part of the 5S rRNA/L5/L18/L25 subcomplex. Contacts the 5S and 23S rRNAs.

Functionally, this is one of the proteins that bind and probably mediate the attachment of the 5S RNA into the large ribosomal subunit, where it forms part of the central protuberance. The sequence is that of Large ribosomal subunit protein uL18 from Lacticaseibacillus casei (strain BL23) (Lactobacillus casei).